The following is a 396-amino-acid chain: ASTKGPSVFPLAPCSRSTSESTAALGCLVKDYFPEPVTVSWNSGALTSGVHTFPAVLQSSGLYSLSSVVTVPSSSLGTKTYTCNVDHKPSNTKVDKRVESKYGPPCPSCPAPEFLGGPSVFLFPPKPKDTLMISRTPEVTCVVVDVSQEDPEVQFNWYVDGVEVHNAKTKPREEQFNSTYRVVSVLTVLHQDWLNGKEYKCKVSNKGLPSSIEKTISKAKGQPREPQVYTLPPSQEEMTKNQVSLTCLVKGFYPSDIAVEWESNGQPENNYKTTPPVLDSDGSFFLYSRLTVDKSRWQEGNVFSCSVMHEALHNHYTQKSLSLSLELQLEESCAEAQDGELDGLWTTITIFITLFLLSVCYSATVTFFKVKWIFSSVVDLKQTIVPDYRNMIRQGA.

A CH1 region spans residues 1–98 (ASTKGPSVFP…PSNTKVDKRV (98 aa)). Residues 1 to 347 (ASTKGPSVFP…DGELDGLWTT (347 aa)) are Extracellular-facing. 3 Ig-like domains span residues 6 to 99 (PSVF…KRVE), 118 to 217 (PSVF…KTIS), and 226 to 322 (PQVY…KSLS). The cysteines at positions 27 and 83 are disulfide-linked. Residues 99–110 (ESKYGPPCPSCP) are hinge. The segment at 111–220 (APEFLGGPSV…SIEKTISKAK (110 aa)) is CH2. 2 cysteine pairs are disulfide-bonded: Cys-141–Cys-201 and Cys-247–Cys-305. The N-linked (GlcNAc...) (complex) asparagine glycan is linked to Asn-177. A CH3 region spans residues 221-327 (GQPREPQVYT…QKSLSLSLEL (107 aa)). Residues 348–368 (ITIFITLFLLSVCYSATVTFF) traverse the membrane as a helical segment. Over 369–396 (KVKWIFSSVVDLKQTIVPDYRNMIRQGA) the chain is Cytoplasmic.

In terms of assembly, immunoglobulins are composed of two identical heavy chains and two identical light chains; disulfide-linked. Glycosylation on Asn-177 is required for interaction with Fc receptors and ability to activate the complement pathway. In terms of processing, (Microbial infection) Deglycosylation on Asn-177 by S.pyogenes EndoS or Endos2 endoglucosidases prevents interaction between immunoglobulin-gamma (IgG) and Fc receptors, impairing ability to activate the complement pathway.

It is found in the secreted. The protein resides in the cell membrane. Its function is as follows. Constant region of immunoglobulin heavy chains. Immunoglobulins, also known as antibodies, are membrane-bound or secreted glycoproteins produced by B lymphocytes. In the recognition phase of humoral immunity, the membrane-bound immunoglobulins serve as receptors which, upon binding of a specific antigen, trigger the clonal expansion and differentiation of B lymphocytes into immunoglobulins-secreting plasma cells. Secreted immunoglobulins mediate the effector phase of humoral immunity, which results in the elimination of bound antigens. The antigen binding site is formed by the variable domain of one heavy chain, together with that of its associated light chain. Thus, each immunoglobulin has two antigen binding sites with remarkable affinity for a particular antigen. The variable domains are assembled by a process called V-(D)-J rearrangement and can then be subjected to somatic hypermutations which, after exposure to antigen and selection, allow affinity maturation for a particular antigen. The polypeptide is Immunoglobulin heavy constant gamma 4 (Homo sapiens (Human)).